The primary structure comprises 439 residues: Forkhead box protein J1-A (439 aa).

A DNA-binding region (fork-head) is located at residues 124-218 (KPPYSYATLI…INGAMKKRRL (95 aa)). The interval 273–293 (EHGWNSISDGKSHKRKQPLPK) is disordered. The span at 284 to 293 (SHKRKQPLPK) shows a compositional bias: basic residues.

This sequence belongs to the FOXJ1 family. Expressed in two independent areas of stage 10-11 embryos; in the dorsal blastopore lip (Spemann organizer) and shortly after in the ectodermal cells of the animal cap. As development proceeds, cells of the animal cap contribute to the epidermis and show a spotty pattern, which suggests expression in ciliated epidermal cells. Distribution of these cells is uniform in the trunk area of the embryo but more random in the head, being practically absent in the cement gland and olfactory placode. The spotted pattern becomes more dispersed as embryos grow in size. Due to cell movements during gastrulation, expression in the dorsal lip becomes located in the dorsal midline with expression restricted to the neuroectoderm. Expressed transiently in cells of the newly formed neural floor plate in the tail of older tadpoles.

It localises to the nucleus. Functionally, key transcription factor required for motile ciliogenesis. Activates genes essential for motile cilia formation and function. Required for ciliogenesis in multiciliated cells. This Xenopus laevis (African clawed frog) protein is Forkhead box protein J1-A (foxj1-a).